The sequence spans 513 residues: Activin receptor type-2A (513 aa).

The signal sequence occupies residues 1–19; sequence MGAATKLAFAVFLISCSSG. The Extracellular portion of the chain corresponds to 20–139; the sequence is AILGRSETQE…VTPKPPLFNT (120 aa). 5 disulfides stabilise this stretch: Cys-30–Cys-60, Cys-50–Cys-78, Cys-85–Cys-104, Cys-91–Cys-103, and Cys-105–Cys-110. N-linked (GlcNAc...) asparagine glycosylation is found at Asn-43 and Asn-66. A helical transmembrane segment spans residues 140-160; the sequence is LLYSLVPIMGIAVIVLFSFWM. Over 161–513 the chain is Cytoplasmic; sequence YRHHKLAYPP…VDFPPKESSL (353 aa). Residues 192–485 form the Protein kinase domain; it reads LQLLEIKARG…EERIIQMQKL (294 aa). Residues 198-206 and Lys-219 each bind ATP; that span reads KARGRFGCV. Residue Asp-322 is the Proton acceptor of the active site.

Belongs to the protein kinase superfamily. TKL Ser/Thr protein kinase family. TGFB receptor subfamily. The cofactor is Mg(2+). It depends on Mn(2+) as a cofactor. As to expression, expressed in hen anterior pituitary during the ovulatory cycle and in the ovarian follicle.

It localises to the cell membrane. The enzyme catalyses L-threonyl-[receptor-protein] + ATP = O-phospho-L-threonyl-[receptor-protein] + ADP + H(+). It carries out the reaction L-seryl-[receptor-protein] + ATP = O-phospho-L-seryl-[receptor-protein] + ADP + H(+). In terms of biological role, on ligand binding, forms a receptor complex consisting of two type II and two type I transmembrane serine/threonine kinases. Type II receptors phosphorylate and activate type I receptors which autophosphorylate, then bind and activate SMAD transcriptional regulators. Receptor for activin A, activin B and inhibin A. May modulate neuropeptide expression in dorsal root ganglia (DRG) neurons and ovarian follicle development. This Gallus gallus (Chicken) protein is Activin receptor type-2A (ACVR2A).